Reading from the N-terminus, the 227-residue chain is (S)-2-haloacid dehalogenase 1 (227 aa).

Asp-10 serves as the catalytic Nucleophile. An (S)-2-haloacid-binding positions include 11–12 (AY), Arg-41, and 118–119 (SN). The segment at 175-180 (SSNAWD) is important for catalytic activity.

The protein belongs to the HAD-like hydrolase superfamily. S-2-haloalkanoic acid dehalogenase family.

It carries out the reaction an (S)-2-haloacid + H2O = a (2R)-2-hydroxycarboxylate + a halide anion + H(+). The enzyme catalyses (S)-2-chloropropanoate + H2O = (R)-lactate + chloride + H(+). Its function is as follows. Catalyzes the hydrolytic dehalogenation of small (S)-2-haloalkanoic acids to yield the corresponding (R)-2-hydroxyalkanoic acids. Acts on acids of short chain lengths, C(2) to C(4), with inversion of configuration at C-2. Active with 2-halogenated carboxylic acids and converts only the S-isomer (or L-isomer) of 2-chloropropionic acid with inversion of configuration to produce R-lactate (or D-isomer). This Pseudomonas sp. (strain CBS-3) protein is (S)-2-haloacid dehalogenase 1.